Here is a 491-residue protein sequence, read N- to C-terminus: NADH-quinone oxidoreductase subunit N (491 aa).

A run of 14 helical transmembrane segments spans residues 6–26 (TLAPVAPIIFLAIAIAAINWI), 37–57 (VAYPLSLLTTLVLTAWFGMNA), 69–89 (LVVIDPMANVLSAFCAAGLFV), 103–123 (MFAGEFYMLALFTLGGQIVMI), 128–148 (FLTLYLGLELLSLSSYALVAL), 163–183 (FVLGALASGFLLYGISMMYGA), 206–226 (LAFGVVFIVAGLSFKLGAAPF), 238–258 (PTAVTLLIAGGPKVAAFALFI), 273–293 (QMMLVVLSIISLAIGNLTAIV), 301–321 (LAYSTISHMGFVLLGLLSGVV), 335–355 (AMFYSVTYLLTTLGTFGIILL), 379–399 (FAFLMLVMMFSLAGIPPTVGF), 413–433 (GMTWLAVVAVLFSLIGAFYYL), and 458–478 (SMLSVNGAAVILLGLFPAALM).

Belongs to the complex I subunit 2 family. NDH-1 is composed of 14 different subunits. Subunits NuoA, H, J, K, L, M, N constitute the membrane sector of the complex.

Its subcellular location is the cell inner membrane. It catalyses the reaction a quinone + NADH + 5 H(+)(in) = a quinol + NAD(+) + 4 H(+)(out). Its function is as follows. NDH-1 shuttles electrons from NADH, via FMN and iron-sulfur (Fe-S) centers, to quinones in the respiratory chain. The immediate electron acceptor for the enzyme in this species is believed to be ubiquinone. Couples the redox reaction to proton translocation (for every two electrons transferred, four hydrogen ions are translocated across the cytoplasmic membrane), and thus conserves the redox energy in a proton gradient. This chain is NADH-quinone oxidoreductase subunit N, found in Cupriavidus taiwanensis (strain DSM 17343 / BCRC 17206 / CCUG 44338 / CIP 107171 / LMG 19424 / R1) (Ralstonia taiwanensis (strain LMG 19424)).